The chain runs to 877 residues: Alanine--tRNA ligase (877 aa).

Positions 563, 567, 665, and 669 each coordinate Zn(2+).

The protein belongs to the class-II aminoacyl-tRNA synthetase family. Zn(2+) is required as a cofactor.

It localises to the cytoplasm. It catalyses the reaction tRNA(Ala) + L-alanine + ATP = L-alanyl-tRNA(Ala) + AMP + diphosphate. Its function is as follows. Catalyzes the attachment of alanine to tRNA(Ala) in a two-step reaction: alanine is first activated by ATP to form Ala-AMP and then transferred to the acceptor end of tRNA(Ala). Also edits incorrectly charged Ser-tRNA(Ala) and Gly-tRNA(Ala) via its editing domain. This Thermoanaerobacter pseudethanolicus (strain ATCC 33223 / 39E) (Clostridium thermohydrosulfuricum) protein is Alanine--tRNA ligase.